A 774-amino-acid chain; its full sequence is Ion-translocating oxidoreductase complex subunit C (774 aa).

2 4Fe-4S ferredoxin-type domains span residues 369–397 and 407–436; these read GEPQ…QQLY and KATT…VQYF. Cys377, Cys380, Cys383, Cys387, Cys416, Cys419, Cys422, and Cys426 together coordinate [4Fe-4S] cluster. The disordered stretch occupies residues 602–750; that stretch reads KLEQQQANAE…EPEEQIDPRK (149 aa).

The protein belongs to the 4Fe4S bacterial-type ferredoxin family. RnfC subfamily. As to quaternary structure, the complex is composed of six subunits: RsxA, RsxB, RsxC, RsxD, RsxE and RsxG. [4Fe-4S] cluster is required as a cofactor.

It is found in the cell inner membrane. Its function is as follows. Part of a membrane-bound complex that couples electron transfer with translocation of ions across the membrane. Required to maintain the reduced state of SoxR. In Escherichia coli O6:K15:H31 (strain 536 / UPEC), this protein is Ion-translocating oxidoreductase complex subunit C.